The chain runs to 501 residues: Dynein regulatory complex subunit 5 (501 aa).

A compositionally biased stretch (polar residues) spans 1–23; it reads MQETVTTSALLDPSHSSVSTQDK. 2 disordered regions span residues 1 to 56 and 203 to 222; these read MQET…HPGA and PAQL…EMEE. The span at 24 to 34 shows a compositional bias: low complexity; it reads SSTGGHTSSTG. Polar residues predominate over residues 35-49; the sequence is PQPSKPSITPVSAKS. LRR repeat units follow at residues 308–321, 335–355, 363–383, 391–411, and 419–439; these read VLEE…LIGD, RLRV…QSLA, NLIS…QALA, CLTT…TLLS, and TLTS…KQLL.

This sequence belongs to the DRC5 family. In terms of assembly, component of the nexin-dynein regulatory complex (N-DRC). Interacts with DRC1. Interacts with FBXL13/DRC6, DRC3 and DRC7.

Its subcellular location is the cell projection. It localises to the cilium. It is found in the flagellum. The protein localises to the cytoplasm. The protein resides in the cytoskeleton. Its subcellular location is the flagellum axoneme. In terms of biological role, component of the nexin-dynein regulatory complex (N-DRC) a key regulator of ciliary/flagellar motility which maintains the alignment and integrity of the distal axoneme and regulates microtubule sliding in motile axonemes. May play a role in the assembly of N-DRC. May be required for sperm motility. The sequence is that of Dynein regulatory complex subunit 5 (TCTE1) from Macaca fascicularis (Crab-eating macaque).